We begin with the raw amino-acid sequence, 349 residues long: UDP-3-O-acylglucosamine N-acyltransferase (349 aa).

H240 functions as the Proton acceptor in the catalytic mechanism.

Belongs to the transferase hexapeptide repeat family. LpxD subfamily. As to quaternary structure, homotrimer.

The enzyme catalyses a UDP-3-O-[(3R)-3-hydroxyacyl]-alpha-D-glucosamine + a (3R)-hydroxyacyl-[ACP] = a UDP-2-N,3-O-bis[(3R)-3-hydroxyacyl]-alpha-D-glucosamine + holo-[ACP] + H(+). Its pathway is bacterial outer membrane biogenesis; LPS lipid A biosynthesis. Catalyzes the N-acylation of UDP-3-O-acylglucosamine using 3-hydroxyacyl-ACP as the acyl donor. Is involved in the biosynthesis of lipid A, a phosphorylated glycolipid that anchors the lipopolysaccharide to the outer membrane of the cell. The chain is UDP-3-O-acylglucosamine N-acyltransferase from Porphyromonas gingivalis (strain ATCC BAA-308 / W83).